Reading from the N-terminus, the 782-residue chain is Calcium-independent phospholipase A2-gamma (782 aa).

A glycan (N-linked (GlcNAc...) asparagine) is linked at Asn-4. 2 disordered regions span residues 219–275 (EKMS…PSAI) and 317–343 (SKSQ…AEEK). The span at 220–248 (KMSQQKENEHFRDKSELEDKKVEEGKLRS) shows a compositional bias: basic and acidic residues. Asn-361 is a glycosylation site (N-linked (GlcNAc...) asparagine). One can recognise a PNPLA domain in the interval 445–640 (LSIDGGGTRG…LLNNPSALAM (196 aa)). A GXGXXG motif is present at residues 449 to 454 (GGGTRG). Residues 475–495 (LFDYICGVSTGAILAFMLGLF) traverse the membrane as a helical segment. A GXSXG motif is present at residues 481 to 485 (GVSTG). Ser-483 (nucleophile) is an active-site residue. Catalysis depends on Asp-627, which acts as the Proton acceptor. Residues 627-629 (DGG) carry the DGA/G motif. Position 736 is an N6-succinyllysine (Lys-736).

Expressed in parenchymal tissues including heart, skeletal muscle, placenta, brain, liver and pancreas. Also expressed in bronchial epithelial cells and kidney. Highest expression is observed in skeletal muscle and heart.

It localises to the endoplasmic reticulum membrane. Its subcellular location is the mitochondrion membrane. It is found in the peroxisome membrane. It carries out the reaction a 1,2-diacyl-sn-glycero-3-phosphocholine + H2O = a 1-acyl-sn-glycero-3-phosphocholine + a fatty acid + H(+). It catalyses the reaction a 1,2-diacyl-sn-glycero-3-phosphocholine + H2O = a 2-acyl-sn-glycero-3-phosphocholine + a fatty acid + H(+). The catalysed reaction is a 1,2-diacyl-sn-glycero-3-phosphoethanolamine + H2O = a 1-acyl-sn-glycero-3-phosphoethanolamine + a fatty acid + H(+). The enzyme catalyses a 1-O-(1Z-alkenyl)-2-acyl-sn-glycero-3-phosphocholine + H2O = a 1-O-(1Z-alkenyl)-sn-glycero-3-phosphocholine + a fatty acid + H(+). It carries out the reaction a 1-acyl-sn-glycero-3-phosphocholine + H2O = sn-glycerol 3-phosphocholine + a fatty acid + H(+). It catalyses the reaction 1-acyl-2-(9Z,12Z)-octadecadienoyl-sn-glycero-3-phosphocholine + H2O = a 1-acyl-sn-glycero-3-phosphocholine + (9Z,12Z)-octadecadienoate + H(+). The catalysed reaction is 1-acyl-2-(5Z,8Z,11Z,14Z-eicosatetraenoyl)-sn-glycero-3-phosphocholine + H2O = a 1-acyl-sn-glycero-3-phosphocholine + (5Z,8Z,11Z,14Z)-eicosatetraenoate + H(+). The enzyme catalyses 1-hexadecanoyl-2-(5Z,8Z,11Z,14Z-eicosatetraenoyl)-sn-glycero-3-phosphocholine + H2O = 1-hexadecanoyl-sn-glycero-3-phosphocholine + (5Z,8Z,11Z,14Z)-eicosatetraenoate + H(+). It carries out the reaction 1-octadecanoyl-2-(9Z-octadecenoyl)-sn-glycero-3-phosphocholine + H2O = 1-octadecanoyl-sn-glycero-3-phosphocholine + (9Z)-octadecenoate + H(+). It catalyses the reaction 1-hexadecanoyl-2-(9Z-octadecenoyl)-sn-glycero-3-phosphocholine + H2O = 1-hexadecanoyl-sn-glycero-3-phosphocholine + (9Z)-octadecenoate + H(+). The catalysed reaction is 1-hexadecanoyl-2-(9Z,12Z-octadecadienoyl)-sn-glycero-3-phosphocholine + H2O = (9Z,12Z)-octadecadienoate + 1-hexadecanoyl-sn-glycero-3-phosphocholine + H(+). The enzyme catalyses 1-acyl-2-(9Z,12Z)-octadecadienoyl-sn-glycero-3-phosphoethanolamine + H2O = a 1-acyl-sn-glycero-3-phosphoethanolamine + (9Z,12Z)-octadecadienoate + H(+). It carries out the reaction 1-acyl-2-(5Z,8Z,11Z,14Z)-eicosatetraenoyl-sn-glycero-3-phosphoethanolamine + H2O = a 1-acyl-sn-glycero-3-phosphoethanolamine + (5Z,8Z,11Z,14Z)-eicosatetraenoate + H(+). It catalyses the reaction 1-hexadecanoyl-2-(5Z,8Z,11Z,14Z-eicosatetraenoyl)-sn-glycero-3-phosphoethanolamine + H2O = 1-hexadecanoyl-sn-glycero-3-phosphoethanolamine + (5Z,8Z,11Z,14Z)-eicosatetraenoate + H(+). The catalysed reaction is 1-hexadecanoyl-2-(5Z,8Z,11Z,14Z-eicosatetraenoyl)-sn-glycero-3-phosphocholine + H2O = 2-(5Z,8Z,11Z,14Z)-eicosatetraenoyl-sn-glycero-3-phosphocholine + hexadecanoate + H(+). The enzyme catalyses 1-octadecanoyl-2-(9Z-octadecenoyl)-sn-glycero-3-phosphocholine + H2O = 2-(9Z-octadecenoyl)-sn-glycero-3-phosphocholine + octadecanoate + H(+). It carries out the reaction 1-hexadecanoyl-2-(4Z,7Z,10Z,13Z,16Z,19Z-docosahexaenoyl)-sn-glycero-3-phosphocholine + H2O = 2-(4Z,7Z,10Z,13Z,16Z,19Z-docosahexaenoyl)-sn-glycero-3-phosphocholine + hexadecanoate + H(+). It catalyses the reaction 1-O-(1Z)-hexadecenyl-2 (5Z,8Z,11Z,14Z)-eicosatetraenoyl-sn-glycero-3-phosphocholine + H2O = 1-(1Z-hexadecenyl)-sn-glycero-3-phosphocholine + (5Z,8Z,11Z,14Z)-eicosatetraenoate + H(+). The catalysed reaction is 1-O-(1Z-hexadecenyl)-2-(9Z-octadecenoyl)-sn-glycero-3-phosphocholine + H2O = 1-(1Z-hexadecenyl)-sn-glycero-3-phosphocholine + (9Z)-octadecenoate + H(+). The enzyme catalyses 1-hexadecanoyl-sn-glycero-3-phosphocholine + H2O = sn-glycerol 3-phosphocholine + hexadecanoate + H(+). It carries out the reaction 1',3'-bis-[1,2-di-(9Z,12Z-octadecadienoyl)-sn-glycero-3-phospho]-glycerol + H2O = 1'-[1,2-di-(9Z,12Z-octadecadienoyl)-sn-glycero-3-phospho]-3'-[1-(9Z,12Z-octadecadienoyl)-sn-glycero-3-phospho]-glycerol + (9Z,12Z)-octadecadienoate + H(+). It catalyses the reaction 1'-[1-acyl-2-(9-hydroxy-(10E,12Z)-octadecadienoyl)-sn-glycero-3-phospho]-3'-[1,2-diacyl-sn-glycero-3-phospho]-glycerol + H2O = 9-hydroxy-(10E,12Z)-octadecadienoate + 1'-[1,2-diacyl-sn-glycero-3-phospho],3'-[1-acyl-sn-glycero-3-phospho]-glycerol + H(+). Its pathway is phospholipid metabolism. Its activity is regulated as follows. Calcium-independent phospholipase. Inhibited by (E)-6-bromomethylene-3-1-naphthalenyl-2H-tetrahydropyran-2-one (BEL). The activity toward 1-hexadecanoyl-2-(5Z,8Z,11Z,14Z-eicosatetraenoyl)-sn-glycero-3-phosphocholine is stimulated by cardiolipin. In terms of biological role, calcium-independent and membrane-bound phospholipase, that catalyzes the esterolytic cleavage of fatty acids from glycerophospholipids to yield free fatty acids and lysophospholipids, hence regulating membrane physical properties and the release of lipid second messengers and growth factors. Hydrolyzes phosphatidylethanolamine, phosphatidylcholine and probably phosphatidylinositol with a possible preference for the former. Also has a broad substrate specificity in terms of fatty acid moieties, hydrolyzing saturated and mono-unsaturated fatty acids at nearly equal rates from either the sn-1 or sn-2 position in diacyl phosphatidylcholine. However, has a weak activity toward polyunsaturated fatty acids at the sn-2 position, and thereby favors the production of 2-arachidonoyl lysophosphatidylcholine, a key branch point metabolite in eicosanoid signaling. On the other hand, can produce arachidonic acid from the sn-1 position of diacyl phospholipid and from the sn-2 position of arachidonate-containing plasmalogen substrates. Therefore, plays an important role in the mobilization of arachidonic acid in response to cellular stimuli and the generation of lipid second messengers. Can also hydrolyze lysophosphatidylcholine. In the mitochondrial compartment, catalyzes the hydrolysis and release of oxidized aliphatic chains from cardiolipin and integrates mitochondrial bioenergetics and signaling. It is essential for maintaining efficient bioenergetic mitochondrial function through tailoring mitochondrial membrane lipid metabolism and composition. In Homo sapiens (Human), this protein is Calcium-independent phospholipase A2-gamma.